A 166-amino-acid polypeptide reads, in one-letter code: MSEPTSRRPAYARLLDRAVRILAVRDHSEQELRRKLSAPVMGKNGPEEIDATADDYERVIAWCHEHHYLDDERFVMRFIASRSRKGYGPARIRQELNQKGISRESTEKAMRECEIDWSEMAREQAVRKYGEPLPSNFSEKVKVQRFLLYRGYLMDDIQQIWRNFAD.

It belongs to the RecX family.

It localises to the cytoplasm. In terms of biological role, modulates RecA activity. The chain is Regulatory protein RecX from Salmonella agona (strain SL483).